The sequence spans 310 residues: Small ribosomal subunit biogenesis GTPase RsgA (310 aa).

Residues 77-238 form the CP-type G domain; sequence LSKQSHILAA…IIDTPGIKGF (162 aa). GTP is bound by residues 126–129 and 180–188; these read NKTD and GNSGVGKST. Zn(2+) is bound by residues Cys262, Cys267, His269, and Cys275.

It belongs to the TRAFAC class YlqF/YawG GTPase family. RsgA subfamily. As to quaternary structure, monomer. Associates with 30S ribosomal subunit, binds 16S rRNA. Zn(2+) serves as cofactor.

It localises to the cytoplasm. Functionally, one of several proteins that assist in the late maturation steps of the functional core of the 30S ribosomal subunit. Helps release RbfA from mature subunits. May play a role in the assembly of ribosomal proteins into the subunit. Circularly permuted GTPase that catalyzes slow GTP hydrolysis, GTPase activity is stimulated by the 30S ribosomal subunit. In Phocaeicola vulgatus (strain ATCC 8482 / DSM 1447 / JCM 5826 / CCUG 4940 / NBRC 14291 / NCTC 11154) (Bacteroides vulgatus), this protein is Small ribosomal subunit biogenesis GTPase RsgA.